The chain runs to 120 residues: UPF0231 protein ETA_08290 (120 aa).

Belongs to the UPF0231 family.

The protein is UPF0231 protein ETA_08290 of Erwinia tasmaniensis (strain DSM 17950 / CFBP 7177 / CIP 109463 / NCPPB 4357 / Et1/99).